A 72-amino-acid polypeptide reads, in one-letter code: MSKSDYIELEGFVKEKLPNTTFMVELENGHCILAHISGKIRKHYIRILPGDKVTVEMTPYDLTKGRITFRHK.

Residues 1–72 enclose the S1-like domain; sequence MSKSDYIELE…TKGRITFRHK (72 aa).

It belongs to the IF-1 family. In terms of assembly, component of the 30S ribosomal translation pre-initiation complex which assembles on the 30S ribosome in the order IF-2 and IF-3, IF-1 and N-formylmethionyl-tRNA(fMet); mRNA recruitment can occur at any time during PIC assembly.

It localises to the cytoplasm. Functionally, one of the essential components for the initiation of protein synthesis. Stabilizes the binding of IF-2 and IF-3 on the 30S subunit to which N-formylmethionyl-tRNA(fMet) subsequently binds. Helps modulate mRNA selection, yielding the 30S pre-initiation complex (PIC). Upon addition of the 50S ribosomal subunit IF-1, IF-2 and IF-3 are released leaving the mature 70S translation initiation complex. The protein is Translation initiation factor IF-1 of Vesicomyosocius okutanii subsp. Calyptogena okutanii (strain HA).